The chain runs to 263 residues: uncharacterized protein (263 aa).

The signal sequence occupies residues 1–22 (MRYLKRVVLYRIVMVLSVFIIG). C23 is lipidated: N-palmitoyl cysteine. A lipid anchor (S-diacylglycerol cysteine) is attached at C23.

It belongs to the staphylococcal tandem lipoprotein family.

It localises to the cell membrane. This is an uncharacterized protein from Staphylococcus aureus (strain bovine RF122 / ET3-1).